Reading from the N-terminus, the 304-residue chain is Virulence protein VirA (304 aa).

Its function is as follows. Could be involved in the biosynthesis of a major surface antigen important for virulence. This is Virulence protein VirA (virA) from Vibrio anguillarum (strain ATCC 68554 / 775) (Listonella anguillarum).